The following is a 181-amino-acid chain: Protein Syd (181 aa).

This sequence belongs to the Syd family.

Its subcellular location is the cell inner membrane. Interacts with the SecY protein in vivo. May bind preferentially to an uncomplexed state of SecY, thus functioning either as a chelating agent for excess SecY in the cell or as a regulatory factor that negatively controls the translocase function. This is Protein Syd from Klebsiella pneumoniae subsp. pneumoniae (strain ATCC 700721 / MGH 78578).